A 221-amino-acid chain; its full sequence is PKHD-type hydroxylase PMT_0286 (221 aa).

The Fe2OG dioxygenase domain maps to 80–174; that stretch reads HIHGVMFSRS…RLVCVGWIQS (95 aa). Positions 98, 100, and 155 each coordinate Fe cation. Arginine 165 serves as a coordination point for 2-oxoglutarate.

Requires Fe(2+) as cofactor. The cofactor is L-ascorbate.

The protein is PKHD-type hydroxylase PMT_0286 of Prochlorococcus marinus (strain MIT 9313).